The primary structure comprises 176 residues: Inner membrane-spanning protein YciB (176 aa).

5 helical membrane-spanning segments follow: residues 3–23 (FLFD…WGIF), 49–69 (TMLW…LVLH), 72–92 (KFIQ…LVAA), 118–138 (KLNL…LYVV), and 149–169 (FKLF…SLWL).

It belongs to the YciB family.

It localises to the cell inner membrane. Functionally, plays a role in cell envelope biogenesis, maintenance of cell envelope integrity and membrane homeostasis. This Burkholderia thailandensis (strain ATCC 700388 / DSM 13276 / CCUG 48851 / CIP 106301 / E264) protein is Inner membrane-spanning protein YciB.